Consider the following 119-residue polypeptide: Large ribosomal subunit protein uL22 (119 aa).

Belongs to the universal ribosomal protein uL22 family. Part of the 50S ribosomal subunit.

This protein binds specifically to 23S rRNA; its binding is stimulated by other ribosomal proteins, e.g. L4, L17, and L20. It is important during the early stages of 50S assembly. It makes multiple contacts with different domains of the 23S rRNA in the assembled 50S subunit and ribosome. In terms of biological role, the globular domain of the protein is located near the polypeptide exit tunnel on the outside of the subunit, while an extended beta-hairpin is found that lines the wall of the exit tunnel in the center of the 70S ribosome. The chain is Large ribosomal subunit protein uL22 from Trichormus variabilis (strain ATCC 29413 / PCC 7937) (Anabaena variabilis).